The chain runs to 454 residues: tRNA modification GTPase MnmE (454 aa).

(6S)-5-formyl-5,6,7,8-tetrahydrofolate is bound by residues Arg-23, Glu-80, and Lys-120. Residues 216–377 (GMKVVIAGRP…LRNHLKQSMG (162 aa)) enclose the TrmE-type G domain. Asn-226 serves as a coordination point for K(+). Residues 226–231 (NAGKSS), 245–251 (TDIAGTT), 270–273 (DTAG), 335–338 (NKAD), and 358–360 (SAR) contribute to the GTP site. Ser-230 serves as a coordination point for Mg(2+). Residues Thr-245, Ile-247, and Thr-250 each coordinate K(+). Thr-251 is a binding site for Mg(2+). A (6S)-5-formyl-5,6,7,8-tetrahydrofolate-binding site is contributed by Lys-454.

This sequence belongs to the TRAFAC class TrmE-Era-EngA-EngB-Septin-like GTPase superfamily. TrmE GTPase family. In terms of assembly, homodimer. Heterotetramer of two MnmE and two MnmG subunits. K(+) serves as cofactor.

The protein localises to the cytoplasm. Exhibits a very high intrinsic GTPase hydrolysis rate. Involved in the addition of a carboxymethylaminomethyl (cmnm) group at the wobble position (U34) of certain tRNAs, forming tRNA-cmnm(5)s(2)U34. In Salmonella typhimurium (strain LT2 / SGSC1412 / ATCC 700720), this protein is tRNA modification GTPase MnmE.